Consider the following 62-residue polypeptide: Photosystem II reaction center protein Z (62 aa).

2 consecutive transmembrane segments (helical) span residues 8–28 (LVFILVIFSTLLVVGIPVTFA) and 41–61 (YTGAGIWTGLVLITGLVNSFI).

Belongs to the PsbZ family. In terms of assembly, PSII is composed of 1 copy each of membrane proteins PsbA, PsbB, PsbC, PsbD, PsbE, PsbF, PsbH, PsbI, PsbJ, PsbK, PsbL, PsbM, PsbT, sbX, PsbY, PsbZ, Psb30/Ycf12, at least 3 peripheral proteins of the oxygen-evolving complex and a large number of cofactors. It forms dimeric complexes.

Its subcellular location is the plastid. It localises to the chloroplast thylakoid membrane. Functionally, may control the interaction of photosystem II (PSII) cores with the light-harvesting antenna, regulates electron flow through the 2 photosystem reaction centers. PSII is a light-driven water plastoquinone oxidoreductase, using light energy to abstract electrons from H(2)O, generating a proton gradient subsequently used for ATP formation. This chain is Photosystem II reaction center protein Z, found in Gracilaria tenuistipitata var. liui (Red alga).